The primary structure comprises 513 residues: MQLNPSEISELIKSRISEMGVDSQVRNEGTVISVTDGICRVHGLSGVMQGEMLEFPNNTIGLALNLERDSVGAVVLGEYTHIKEGDPVKCTGRILEVPVGPELLGRVVNALGQPIDGKGPINTKLTDFIEKVAPGVIARQSVSQPVQTGLKAIDAMVPIGRGQRELIIGDRQTGKTAVAVDAIINQKGKGVYCVYVAIGQKASTIANVVRKLTELGAMEYTVVVAASASESAAMQYLSAYAGCTMGEYFRDRGEDALIVYDDLTKQAVAYRQISLLLRRPPGREAYPGDVFYLHSRLLERAARVNAEYVEKFTNGAVKGKTGSLTALPIIETQAGDVSAFVPTNVISITDGQIFLETDLFNAGVRPAINAGISVSRVGGAAQTKVIKKLSGGIRTDLAQYRELAAFAQFASDLDEATRKQLERGRRVTELCKQAQYKPLQVWEMAASLYAVNNGYFDDLEVKNVLAFEKGLQDHLKSKYADLVARIEETKDLSKDDEAALRAAIEDYKRSASF.

169-176 is an ATP binding site; it reads GDRQTGKT.

Belongs to the ATPase alpha/beta chains family. As to quaternary structure, F-type ATPases have 2 components, CF(1) - the catalytic core - and CF(0) - the membrane proton channel. CF(1) has five subunits: alpha(3), beta(3), gamma(1), delta(1), epsilon(1). CF(0) has three main subunits: a(1), b(2) and c(9-12). The alpha and beta chains form an alternating ring which encloses part of the gamma chain. CF(1) is attached to CF(0) by a central stalk formed by the gamma and epsilon chains, while a peripheral stalk is formed by the delta and b chains.

It localises to the cell membrane. It catalyses the reaction ATP + H2O + 4 H(+)(in) = ADP + phosphate + 5 H(+)(out). In terms of biological role, produces ATP from ADP in the presence of a proton gradient across the membrane. The alpha chain is a regulatory subunit. The polypeptide is ATP synthase subunit alpha (Polynucleobacter asymbioticus (strain DSM 18221 / CIP 109841 / QLW-P1DMWA-1) (Polynucleobacter necessarius subsp. asymbioticus)).